Reading from the N-terminus, the 345-residue chain is Anthranilate phosphoribosyltransferase (345 aa).

Residues Gly-84, 87–88 (GD), Thr-92, 94–97 (NIST), 112–120 (KHGGRSVSS), and Ser-124 contribute to the 5-phospho-alpha-D-ribose 1-diphosphate site. Position 84 (Gly-84) interacts with anthranilate. Ser-96 serves as a coordination point for Mg(2+). Arg-170 is an anthranilate binding site. Mg(2+)-binding residues include Asp-229 and Glu-230.

Belongs to the anthranilate phosphoribosyltransferase family. As to quaternary structure, homodimer. The cofactor is Mg(2+).

The enzyme catalyses N-(5-phospho-beta-D-ribosyl)anthranilate + diphosphate = 5-phospho-alpha-D-ribose 1-diphosphate + anthranilate. The protein operates within amino-acid biosynthesis; L-tryptophan biosynthesis; L-tryptophan from chorismate: step 2/5. Functionally, catalyzes the transfer of the phosphoribosyl group of 5-phosphorylribose-1-pyrophosphate (PRPP) to anthranilate to yield N-(5'-phosphoribosyl)-anthranilate (PRA). The chain is Anthranilate phosphoribosyltransferase from Leptothrix cholodnii (strain ATCC 51168 / LMG 8142 / SP-6) (Leptothrix discophora (strain SP-6)).